The primary structure comprises 1505 residues: ABC transporter C family member 13 (1505 aa).

A run of 12 helical transmembrane segments spans residues 11-31 (EAAAAAAHAALLALALLLLLL), 54-68 (AVDGGLAAASSVGAW), 71-91 (AALACCGYALLAQVAALSYEV), 102-122 (ALLLPAVQALAWAALLALAMQ), 131-151 (FPVLVRVWWVVSFVLCVGIAY), 171-191 (MVANFASAPALGFLCLVGVMG), 313-333 (AFAAVNTIVSYVGPYLISYFV), 336-356 (LSGKIEFPHEGYILASVFFVA), 367-387 (WYLGVDVMGIHVKSGLTAMVY), 421-441 (AWYFHDIWMLPLQIILALAIL), 447-467 (IAMVSTLVATVLSIAASVPVA), and 534-554 (FVFWSSPIFVAVITFGTCILL). The region spanning 314 to 589 (FAAVNTIVSY…FPDLISMIAQ (276 aa)) is the ABC transmembrane type-1 1 domain. The region spanning 623-846 (ININDATFSW…GTDFNALVCA (224 aa)) is the ABC transporter 1 domain. Position 658-665 (658-665 (GVIGSGKS)) interacts with ATP. Residues 881–897 (DNLKNKVSNNEKPSSTR) are compositionally biased toward polar residues. The segment at 881 to 919 (DNLKNKVSNNEKPSSTRGIKEKKKKPEERKKKRSVQEEE) is disordered. Over residues 904-919 (KKPEERKKKRSVQEEE) the composition is skewed to basic and acidic residues. 6 helical membrane-spanning segments follow: residues 940–960 (GTLIPLIILAQTMFQVLQIAS), 980–1000 (SVVLLVVYMSLAFGSSLFVFV), 1055–1077 (IAFRLGGFASTTIQLLGIVAVMS), 1081–1103 (WQVLILIVPMAVACMWMQRYYIA), 1149–1169 (LLDCFARPLFSSLAAIEWLCL), and 1174–1194 (LSTFVFAFCMAILVSFPPGTI). The 271-residue stretch at 945 to 1215 (LIILAQTMFQ…GLNLNARMSR (271 aa)) folds into the ABC transmembrane type-1 2 domain. The 235-residue stretch at 1262–1496 (IELVDLKVRY…KSSMFMQLVS (235 aa)) folds into the ABC transporter 2 domain. 1296–1303 (GRTGSGKS) provides a ligand contact to ATP.

It belongs to the ABC transporter superfamily. ABCC family. Conjugate transporter (TC 3.A.1.208) subfamily.

Its subcellular location is the membrane. Functionally, ABC transporter that may affect phytic acid transport and compartmentalization. May function directly or indirectly in removing phytic acid from the cytosol or in vesicle trafficking. Required for phytic acid accumulation in developing seeds. Phytic acid is the primary storage form of phosphorus in cereal grains and other plant seeds. The polypeptide is ABC transporter C family member 13 (Oryza sativa subsp. indica (Rice)).